Consider the following 137-residue polypeptide: ATP synthase epsilon chain (137 aa).

It belongs to the ATPase epsilon chain family. As to quaternary structure, F-type ATPases have 2 components, CF(1) - the catalytic core - and CF(0) - the membrane proton channel. CF(1) has five subunits: alpha(3), beta(3), gamma(1), delta(1), epsilon(1). CF(0) has three main subunits: a, b and c.

Its subcellular location is the cell inner membrane. In terms of biological role, produces ATP from ADP in the presence of a proton gradient across the membrane. This chain is ATP synthase epsilon chain, found in Pseudoalteromonas atlantica (strain T6c / ATCC BAA-1087).